We begin with the raw amino-acid sequence, 108 residues long: TYRO protein tyrosine kinase-binding protein (108 aa).

The N-terminal stretch at 1–25 is a signal peptide; sequence MGRLGPSNGLLPLLLAVGGFSLVQA. At 26-36 the chain is on the extracellular side; the sequence is QRECSCSAVSP. The chain crosses the membrane as a helical span at residues 37–57; that stretch reads GILAGIVLGDLVLTLLIALAV. A Ca(2+)-binding site is contributed by Asp-46. The Cytoplasmic segment spans residues 58–108; that stretch reads YSLGRLVPRTRGAVDVTRKQHIAETESAYQELQGQRSDVYSDLNTQRQYYK. Residues 75–103 enclose the ITAM domain; the sequence is RKQHIAETESAYQELQGQRSDVYSDLNTQ. Phosphotyrosine occurs at positions 86 and 97.

It belongs to the TYROBP family. As to quaternary structure, homodimer; disulfide-linked. Homotrimer; disulfide-linked. Homotetramer; disulfide-linked. Homotrimers and homotetramers form when low levels of partner receptors are available and is competitive with assembly with interacting receptors. They may represent alternative oligomerization states or may be intermediates in the receptor assembly process. Binding of a metal cation aids in homooligomerization through coordination of the metal ion by the subunits of the oligomer. Interacts with TREM1. Interacts with TREM2. Interacts with CLECSF5. Interacts with CD300LB and CD300C2. Interacts with CD300E. Interacts (via ITAM domain) with SYK (via SH2 domains); activates SYK mediating neutrophils and macrophages integrin-mediated activation. Interacts with KLRC2. Interacts with CD300H. Interacts with KLRD1. Interacts with SIGLEC1. Following ligand binding by associated receptors, tyrosine phosphorylated in the ITAM domain which leads to activation of additional tyrosine kinases and subsequent cell activation. Highly expressed in spleen, liver and thymus. Weakly expressed in lymph nodes. Expressed in peripheral blood leukocytes, granulocytes, macrophages, and monocytes. LPS does not increase expression in granulocytes.

The protein resides in the cell membrane. Adapter protein which non-covalently associates with activating receptors found on the surface of a variety of immune cells to mediate signaling and cell activation following ligand binding by the receptors. TYROBP is tyrosine-phosphorylated in the ITAM domain following ligand binding by the associated receptors which leads to activation of additional tyrosine kinases and subsequent cell activation. Also has an inhibitory role in some cells. Non-covalently associates with activating receptors of the CD300 family to mediate cell activation. Also mediates cell activation through association with activating receptors of the CD200R family. Required for neutrophil activation mediated by integrin. Required for the activation of myeloid cells mediated by the CLEC5A/MDL1 receptor. Associates with natural killer (NK) cell receptors such as the KLRD1/KLRC2 heterodimer to mediate NK cell activation. Associates with TREM1 to mediate activation of neutrophils and monocytes. Associates with TREM2 on monocyte-derived dendritic cells to mediate up-regulation of chemokine receptor CCR7 and dendritic cell maturation and survival. Association with TREM2 mediates cytokine-induced formation of multinucleated giant cells which are formed by the fusion of macrophages. Stabilizes the TREM2 C-terminal fragment (TREM2-CTF) produced by TREM2 ectodomain shedding which suppresses the release of pro-inflammatory cytokines. In microglia, required with TREM2 for phagocytosis of apoptotic neurons. Required with ITGAM/CD11B in microglia to control production of microglial superoxide ions which promote the neuronal apoptosis that occurs during brain development. Promotes pro-inflammatory responses in microglia following nerve injury which accelerates degeneration of injured neurons. Positively regulates the expression of the IRAK3/IRAK-M kinase and IL10 production by liver dendritic cells and inhibits their T cell allosimulatory ability. Negatively regulates B cell proliferation. Required for CSF1-mediated osteoclast cytoskeletal organization. Positively regulates multinucleation during osteoclast development. The protein is TYRO protein tyrosine kinase-binding protein of Sus scrofa (Pig).